A 699-amino-acid polypeptide reads, in one-letter code: Polyribonucleotide nucleotidyltransferase (699 aa).

The Mg(2+) site is built by Asp-493 and Asp-499. Positions 560 to 620 (PLIANIEIDP…NKVNQAIEYI (61 aa)) constitute a KH domain. The region spanning 630-697 (GDMFEGKITR…DSGRIQLGKA (68 aa)) is the S1 motif domain.

This sequence belongs to the polyribonucleotide nucleotidyltransferase family. The cofactor is Mg(2+).

The protein resides in the cytoplasm. It catalyses the reaction RNA(n+1) + phosphate = RNA(n) + a ribonucleoside 5'-diphosphate. Functionally, involved in mRNA degradation. Catalyzes the phosphorolysis of single-stranded polyribonucleotides processively in the 3'- to 5'-direction. The chain is Polyribonucleotide nucleotidyltransferase from Thermosipho melanesiensis (strain DSM 12029 / CIP 104789 / BI429).